Reading from the N-terminus, the 185-residue chain is Ribosome-recycling factor (185 aa).

It belongs to the RRF family.

It is found in the cytoplasm. Responsible for the release of ribosomes from messenger RNA at the termination of protein biosynthesis. May increase the efficiency of translation by recycling ribosomes from one round of translation to another. This Pelobacter propionicus (strain DSM 2379 / NBRC 103807 / OttBd1) protein is Ribosome-recycling factor.